Here is a 1033-residue protein sequence, read N- to C-terminus: Lethal(2) giant larvae protein homolog SRO7 (1033 aa).

The tract at residues 16–45 (SLKGQNSETPIENSKASFKSKNSKTSTISK) is disordered. Over residues 18–27 (KGQNSETPIE) the composition is skewed to polar residues. Residues 28–45 (NSKASFKSKNSKTSTISK) are compositionally biased toward low complexity. WD repeat units follow at residues 81-114 (IAAA…VVIK), 121-156 (IKEM…TTVF), 161-197 (ITSI…SFKL), 216-249 (SIQW…KQSF), 274-309 (VIQS…IMAR), 333-397 (KISK…MKIF), 405-440 (IVNI…ETML), 464-538 (ATTS…FEVN), 552-631 (DKIS…STAV), 638-673 (TSAI…YMEN), 685-736 (VTCI…DITN), 745-799 (KIDA…THKG), 804-851 (LAAT…MSEH), and 865-888 (SVLR…STVK). A phosphoserine mark is found at Ser591 and Ser602. The disordered stretch occupies residues 953 to 984 (SFSERSSDDNNANHPEHQYTKPTRKGRNSSYG).

The protein belongs to the WD repeat L(2)GL family. In terms of assembly, interacts with MYO2 and SEC9.

The protein localises to the cytoplasm. The protein resides in the cell membrane. In terms of biological role, acts as an allosteric regulator of polarized exocytosis by promoting the targeted fusion of vesicles with the plasma membrane. Coordinates the spatial and temporal nature of both Rab-dependent tethering and SNARE-dependent membrane fusion of exocytic vesicles with the plasma membrane. Required for targeting of the sodium pumping ATPase ENA1 to the Cell Surface, thus being involved in maintenance of ion homeostasis in cells exposed to NaCl stress. May be involved in the targeting of the myosin proteins to their intrinsic pathways. Multicopy suppressor of RHO3. May also participate in the maintenance of cell polarity and bud growth. The sequence is that of Lethal(2) giant larvae protein homolog SRO7 (SRO7) from Saccharomyces cerevisiae (strain ATCC 204508 / S288c) (Baker's yeast).